The chain runs to 117 residues: Large ribosomal subunit protein uL18 (117 aa).

Belongs to the universal ribosomal protein uL18 family. Part of the 50S ribosomal subunit; part of the 5S rRNA/L5/L18/L25 subcomplex. Contacts the 5S and 23S rRNAs.

This is one of the proteins that bind and probably mediate the attachment of the 5S RNA into the large ribosomal subunit, where it forms part of the central protuberance. This is Large ribosomal subunit protein uL18 from Aster yellows witches'-broom phytoplasma (strain AYWB).